Here is a 348-residue protein sequence, read N- to C-terminus: Lysophosphatidic acid receptor 2 (348 aa).

Topologically, residues 1-30 are extracellular; the sequence is MGHCYYNETIGFFYNNSGKELSSHWRPKDV. 2 N-linked (GlcNAc...) asparagine glycosylation sites follow: Asn-7 and Asn-15. Residues 31 to 51 form a helical membrane-spanning segment; the sequence is VVVALGLTVSVLVLLTNLLVI. The Cytoplasmic segment spans residues 52 to 66; the sequence is AAIASNRRFHQPIYY. A helical membrane pass occupies residues 67–87; the sequence is LLGNLAAADLFAGVAYLFLMF. Topologically, residues 88–104 are extracellular; that stretch reads HTGPRTARLSLEGWFLR. A helical membrane pass occupies residues 105–124; it reads QGLLDTSLTASVATLLAIAV. At 125–143 the chain is on the cytoplasmic side; it reads ERRRSVMAVQLHSRLPRGR. The chain crosses the membrane as a helical span at residues 144–164; the sequence is VVMLIVGVWVAALGLGLLPAH. Residues 165–185 lie on the Extracellular side of the membrane; sequence SWHCLCALDRCSRMAPLLSRS. A helical membrane pass occupies residues 186–206; it reads YLAVWALSSLLVFLLMVAVYT. The Cytoplasmic segment spans residues 207–239; sequence RIFFYVRRRVQRMAEHVSCHPRYRETTLSLVKT. The helical transmembrane segment at 240-260 threads the bilayer; that stretch reads VVIILGAFVVCWTPGQVVLLL. The Extracellular segment spans residues 261–276; it reads DGLGCKSCNVLAVEKY. Residues 277 to 294 traverse the membrane as a helical segment; that stretch reads FLLLAEANSLVNAAVYSC. At 295 to 348 the chain is on the cytoplasmic side; the sequence is RDAEMRRTFRRLLCCACLRRSTRESAHYTSSAQGGASTRIMLPENGHPLMDSTL. A lipid anchor (S-palmitoyl cysteine) is attached at Cys-308. The PDZ-binding signature appears at 345–348; that stretch reads DSTL.

Belongs to the G-protein coupled receptor 1 family. Interacts with SLC9A3R2/NHERF2, MAGI3 and PLCB3. Interacts with RALA and GRK2.

It localises to the cell surface. It is found in the cell membrane. In terms of biological role, receptor for lysophosphatidic acid (LPA), a mediator of diverse cellular activities. Seems to be coupled to the G(i)/G(o), G(12)/G(13), and G(q) families of heteromeric G proteins. Plays a key role in phospholipase C-beta (PLC-beta) signaling pathway. Stimulates phospholipase C (PLC) activity in a manner that is independent of RALA activation. This Macaca fascicularis (Crab-eating macaque) protein is Lysophosphatidic acid receptor 2.